A 433-amino-acid chain; its full sequence is Histidinol dehydrogenase (433 aa).

The NAD(+) site is built by Y129, Q191, and N214. Substrate contacts are provided by S237, Q259, and H262. Residues Q259 and H262 each contribute to the Zn(2+) site. Residues E326 and H327 each act as proton acceptor in the active site. H327, D360, E414, and H419 together coordinate substrate. Zn(2+) is bound at residue D360. H419 is a binding site for Zn(2+).

It belongs to the histidinol dehydrogenase family. Requires Zn(2+) as cofactor.

The enzyme catalyses L-histidinol + 2 NAD(+) + H2O = L-histidine + 2 NADH + 3 H(+). It participates in amino-acid biosynthesis; L-histidine biosynthesis; L-histidine from 5-phospho-alpha-D-ribose 1-diphosphate: step 9/9. Catalyzes the sequential NAD-dependent oxidations of L-histidinol to L-histidinaldehyde and then to L-histidine. This Methanosarcina mazei (strain ATCC BAA-159 / DSM 3647 / Goe1 / Go1 / JCM 11833 / OCM 88) (Methanosarcina frisia) protein is Histidinol dehydrogenase.